A 747-amino-acid chain; its full sequence is Threonine synthase-like 1 (747 aa).

Lysine 351 carries the post-translational modification N6-(pyridoxal phosphate)lysine.

The protein belongs to the threonine synthase family. It depends on pyridoxal 5'-phosphate as a cofactor.

This Mus musculus (Mouse) protein is Threonine synthase-like 1 (Thnsl1).